We begin with the raw amino-acid sequence, 90 residues long: Phenol 2-monooxygenase, stimulatory component DmpM (90 aa).

It belongs to the TmoD/XamoD family. As to quaternary structure, active as a monomer. Formation of dimers inactivates the protein. The multicomponent enzyme phenol hydroxylase is formed by DmpL (P1 component), DmpM (P2 component), DmpN (P3 component), DmpO (P4 component) and DmpP (P5 component).

It catalyses the reaction phenol + NADH + O2 + H(+) = catechol + NAD(+) + H2O. It participates in aromatic compound metabolism; phenol degradation. Part of a multicomponent enzyme which catalyzes the degradation of phenol and some of its methylated derivatives. DmpM is a regulatory subunit that stimulates the phenol hydroxylase activity of the complex. The steady-state rate of phenol hydroxylase turnover is dependent on the DmpM concentration, with a maximum observed rate at about 1.5 DmpM per oxygenase monomer. Higher concentrations of DmpM inhibit phenol hydroxylase activity. May act by altering the redox potential of the oxygenase. Required for growth on phenol and for in vitro phenol hydroxylase activity. This chain is Phenol 2-monooxygenase, stimulatory component DmpM, found in Pseudomonas sp. (strain CF600).